Reading from the N-terminus, the 602-residue chain is DNA damage-binding protein CMR1 (602 aa).

The segment at 35–85 (KEVDNKSFSSPSSQKRRKTTKKPVIKKEISEPSRRSRRIAGIKSELEDPKQ) is disordered. The segment covering 48-58 (QKRRKTTKKPV) has biased composition (basic residues). A compositionally biased stretch (basic and acidic residues) spans 59 to 68 (IKKEISEPSR). 6 WD repeats span residues 229 to 270 (ICHN…NDTK), 291 to 328 (RNVS…STEL), 390 to 430 (LHDK…KSVY), 446 to 484 (NSRL…KLDN), 526 to 569 (GRWV…LAHL), and 571 to 602 (EQVG…YLFE).

The protein belongs to the WD repeat DDB2/WDR76 family.

Functionally, DNA-binding protein that binds to both single- and double-stranded DNA. Binds preferentially to UV-damaged DNA. May be involved in DNA-metabolic processes. In Candida albicans (strain SC5314 / ATCC MYA-2876) (Yeast), this protein is DNA damage-binding protein CMR1.